The sequence spans 245 residues: 23S rRNA (guanosine-2'-O-)-methyltransferase RlmB (245 aa).

S-adenosyl-L-methionine is bound by residues G197, I217, and L226.

It belongs to the class IV-like SAM-binding methyltransferase superfamily. RNA methyltransferase TrmH family. RlmB subfamily.

Its subcellular location is the cytoplasm. It catalyses the reaction guanosine(2251) in 23S rRNA + S-adenosyl-L-methionine = 2'-O-methylguanosine(2251) in 23S rRNA + S-adenosyl-L-homocysteine + H(+). Its function is as follows. Specifically methylates the ribose of guanosine 2251 in 23S rRNA. The chain is 23S rRNA (guanosine-2'-O-)-methyltransferase RlmB from Bordetella parapertussis (strain 12822 / ATCC BAA-587 / NCTC 13253).